Consider the following 92-residue polypeptide: RIIa domain-containing protein 1 (92 aa).

One can recognise an RIIa domain in the interval 43–77 (KEVEWLISGFFREIFLKRPDNILEFAADYFTDPRL).

This Homo sapiens (Human) protein is RIIa domain-containing protein 1 (RIIAD1).